The primary structure comprises 390 residues: Isotocin receptor (390 aa).

Topologically, residues 1–48 (MEEMFKEQDFWSFNESSRNSTVGNETFGGNQTVNPLKRNEEVAKVEVT) are extracellular. N-linked (GlcNAc...) asparagine glycosylation is found at Asn14, Asn19, Asn24, and Asn30. A helical transmembrane segment spans residues 49–69 (VLALVLFLALAGNLCVLIAIY). The Cytoplasmic portion of the chain corresponds to 70 to 86 (TAKHTQSRMYYLMKHLS). Residues 87 to 107 (IADLVVAVFQVLPQLIWDITF) traverse the membrane as a helical segment. The Extracellular portion of the chain corresponds to 108 to 124 (RFYGPDFLCRLVKYLQT). Cys116 and Cys191 are disulfide-bonded. A helical transmembrane segment spans residues 125-145 (VGMFASTYMLVLMSIDRCIAI). Residues 146–160 (CQPLRSLHKRKDRCY) are Cytoplasmic-facing. Residues 161 to 181 (VIVSWALSLVFSVPQVYIFSL) traverse the membrane as a helical segment. Residues 182-206 (REIGNGVYDCWGDFVQPWGAKAYIT) are Extracellular-facing. A helical membrane pass occupies residues 207 to 227 (WISLTIYIIPVAILGGCYGLI). At 228 to 276 (SFKIWQNFKRKTKKDQCITLTTAASKANALARVSSVKLVSKAKITTVKM) the chain is on the cytoplasmic side. The chain crosses the membrane as a helical span at residues 277–297 (TFVIVLAYIVCWTPFFFVQMW). The Extracellular portion of the chain corresponds to 298–311 (SAWDPEAPREAMPF). The helical transmembrane segment at 312 to 332 (IISMLLASLNSCCNPWIYMFF) threads the bilayer. Residues 333-390 (AGHLFHDLKQSLLCCSTLYLKSSQCRCDQEHDSRKSNCSTYVIKSTSSQRSITQSSIT) lie on the Cytoplasmic side of the membrane.

It belongs to the G-protein coupled receptor 1 family. Vasopressin/oxytocin receptor subfamily. In terms of tissue distribution, expressed in brain, intestine, bladder, skeletal muscle, lateral line, gills and kidney.

It localises to the cell membrane. Binds to isotocin. Can also be activated by vasotocin, mesotocin, oxytocin and Arg-vasopressin, although these have lower potencies than isotocin. Produces an induction of membrane chloride currents indicating that it is coupled to the inositol phosphate/calcium pathway. This Catostomus commersonii (White sucker) protein is Isotocin receptor.